The chain runs to 342 residues: Acetoin:2,6-dichlorophenolindophenol oxidoreductase subunit beta (342 aa).

As to quaternary structure, tetramer of 2 alpha and 2 beta subunits.

It participates in ketone degradation; acetoin degradation. In terms of biological role, catalyzes the 2,6-dichlorophenolindophenol-dependent cleavage of acetoin into acetate and acetaldehyde. This is Acetoin:2,6-dichlorophenolindophenol oxidoreductase subunit beta (acoB) from Bacillus subtilis (strain 168).